Consider the following 348-residue polypeptide: Phenylalanine--tRNA ligase alpha subunit (348 aa).

Glutamate 259 lines the Mg(2+) pocket.

It belongs to the class-II aminoacyl-tRNA synthetase family. Phe-tRNA synthetase alpha subunit type 1 subfamily. As to quaternary structure, tetramer of two alpha and two beta subunits. The cofactor is Mg(2+).

It localises to the cytoplasm. The enzyme catalyses tRNA(Phe) + L-phenylalanine + ATP = L-phenylalanyl-tRNA(Phe) + AMP + diphosphate + H(+). The chain is Phenylalanine--tRNA ligase alpha subunit from Lactiplantibacillus plantarum (strain ATCC BAA-793 / NCIMB 8826 / WCFS1) (Lactobacillus plantarum).